Here is a 585-residue protein sequence, read N- to C-terminus: Lipoprotein LpqB (585 aa).

An N-terminal signal peptide occupies residues 1-18 (MKRLLTVLVVGLVALVSG). A lipid anchor (N-palmitoyl cysteine) is attached at cysteine 19. Cysteine 19 carries S-diacylglycerol cysteine lipidation. A disordered region spans residues 24–46 (SSSSPQAIGTVERPAPPSLPKPT). Residues 37–46 (PAPPSLPKPT) are compositionally biased toward pro residues.

Belongs to the LpqB lipoprotein family. As to quaternary structure, interacts with MtrB, probably extracytoplasmically via its sensor domain.

It localises to the cell membrane. The protein resides in the secreted. Its subcellular location is the cell wall. Its function is as follows. May modulate activity of the MtrAB system in controlling homeostasis of the cell wall and cell division. The chain is Lipoprotein LpqB from Mycolicibacterium smegmatis (strain ATCC 700084 / mc(2)155) (Mycobacterium smegmatis).